A 318-amino-acid polypeptide reads, in one-letter code: ADP-ribosyl cyclase/cyclic ADP-ribose hydrolase 2 (318 aa).

An N-terminal signal peptide occupies residues 1 to 32 (MAAQGCAASRLLQLLLQLLLLLLLLAAGGARA). 3 disulfide bridges follow: Cys51–Cys67, Cys83–Cys163, and Cys144–Cys157. N-linked (GlcNAc...) asparagine glycans are attached at residues Asn66 and Asn95. Trp109 serves as a coordination point for NAD(+). Trp109 lines the nicotinamide pocket. A glycan (N-linked (GlcNAc...) asparagine) is linked at Asn148. Residue Trp172 coordinates NAD(+). A glycan (N-linked (GlcNAc...) asparagine) is linked at Asn192. Glu210 is an NAD(+) binding site. Intrachain disulfides connect Cys238-Cys259 and Cys271-Cys280. Ala293 is lipidated: GPI-anchor amidated alanine. Residues 294–318 (PSLYTEQRAGLIIPLFLVLASRTQL) constitute a propeptide, removed in mature form.

It belongs to the ADP-ribosyl cyclase family. Homodimer. As to expression, expressed in various tissues including placenta, lung, liver and kidney.

It is found in the cell membrane. The enzyme catalyses NAD(+) + H2O = ADP-D-ribose + nicotinamide + H(+). It catalyses the reaction NAD(+) = cyclic ADP-beta-D-ribose + nicotinamide + H(+). The catalysed reaction is cyclic ADP-beta-D-ribose + H2O = ADP-D-ribose. ADP-ribosyl cyclase and cADPR hydrolase activities are both activated by Zn(2+) or Mn(2+), and inhibited by Cu(2+), while Mg(2+) and Ca(2+) do not have any significant influence. Functionally, catalyzes both the synthesis of cyclic ADP-beta-D-ribose (cADPR) from NAD(+), and its hydrolysis to ADP-D-ribose (ADPR). Cyclic ADPR is known to serve as an endogenous second messenger that elicits calcium release from intracellular stores, and thus regulates the mobilization of intracellular calcium. May be involved in pre-B-cell growth. This is ADP-ribosyl cyclase/cyclic ADP-ribose hydrolase 2 (BST1) from Homo sapiens (Human).